Here is a 65-residue protein sequence, read N- to C-terminus: Defensin-B2 (65 aa).

Positions 1–23 are cleaved as a signal peptide; it reads MEARVLLLCAVLFLLVHTPPAAG. 3 cysteine pairs are disulfide-bonded: Cys-29/Cys-56, Cys-36/Cys-50, and Cys-40/Cys-57.

Belongs to the beta-defensin family. As to expression, lowly expressed in spleen, and lung.

Its subcellular location is the secreted. In terms of biological role, has antimicrobial activity. The sequence is that of Defensin-B2 from Ornithorhynchus anatinus (Duckbill platypus).